The following is a 428-amino-acid chain: Enolase (428 aa).

A (2R)-2-phosphoglycerate-binding site is contributed by Gln-163. Glu-205 (proton donor) is an active-site residue. Residues Asp-242, Glu-286, and Asp-313 each coordinate Mg(2+). 4 residues coordinate (2R)-2-phosphoglycerate: Lys-338, Arg-367, Ser-368, and Lys-389. Lys-338 acts as the Proton acceptor in catalysis.

The protein belongs to the enolase family. Mg(2+) serves as cofactor.

Its subcellular location is the cytoplasm. It localises to the secreted. The protein localises to the cell surface. The catalysed reaction is (2R)-2-phosphoglycerate = phosphoenolpyruvate + H2O. It participates in carbohydrate degradation; glycolysis; pyruvate from D-glyceraldehyde 3-phosphate: step 4/5. Its function is as follows. Catalyzes the reversible conversion of 2-phosphoglycerate (2-PG) into phosphoenolpyruvate (PEP). It is essential for the degradation of carbohydrates via glycolysis. The chain is Enolase from Lactobacillus acidophilus (strain ATCC 700396 / NCK56 / N2 / NCFM).